Consider the following 869-residue polypeptide: Protein translocase subunit SecA (869 aa).

ATP-binding positions include Gln85, Gly103 to Thr107, and Asp508.

This sequence belongs to the SecA family. As to quaternary structure, monomer and homodimer. Part of the essential Sec protein translocation apparatus which comprises SecA, SecYEG and auxiliary proteins SecDF. Other proteins may also be involved.

It localises to the cell membrane. It is found in the cytoplasm. It catalyses the reaction ATP + H2O + cellular proteinSide 1 = ADP + phosphate + cellular proteinSide 2.. In terms of biological role, part of the Sec protein translocase complex. Interacts with the SecYEG preprotein conducting channel. Has a central role in coupling the hydrolysis of ATP to the transfer of proteins into and across the cell membrane, serving as an ATP-driven molecular motor driving the stepwise translocation of polypeptide chains across the membrane. In Deinococcus deserti (strain DSM 17065 / CIP 109153 / LMG 22923 / VCD115), this protein is Protein translocase subunit SecA.